The primary structure comprises 848 residues: Beta-galactosidase 13 (848 aa).

Positions 1–27 (MKIHSSDHSWLLLAVLVILLSFSGALS) are cleaved as a signal peptide. The N-linked (GlcNAc...) asparagine glycan is linked to N107. The active-site Proton donor is the E200. E271 serves as the catalytic Nucleophile. Residues N272, N303, N376, N398, N782, N787, and N817 are each glycosylated (N-linked (GlcNAc...) asparagine). The 90-residue stretch at 754 to 843 (DDVHLTANLK…KKLAVQVKCG (90 aa)) folds into the SUEL-type lectin domain.

The protein belongs to the glycosyl hydrolase 35 family. Ubiquitous, with higher expression levels in roots, flowers and siliques.

It is found in the secreted. Its subcellular location is the extracellular space. It localises to the apoplast. It carries out the reaction Hydrolysis of terminal non-reducing beta-D-galactose residues in beta-D-galactosides.. The polypeptide is Beta-galactosidase 13 (BGAL13) (Arabidopsis thaliana (Mouse-ear cress)).